A 345-amino-acid chain; its full sequence is Ubiquitin-associated domain-containing protein 2 (345 aa).

The signal sequence occupies residues 1 to 35 (MFTSTGSSGLYKAPLSKSLLLVPSALSLLLALLLP). Residues 36 to 91 (HCQKLFVYDLHAVKNDFQIWRLICGRIICLDLKDTFCSSLLIYNFRIFERRYGSRK) are Extracellular-facing. Residues 92 to 112 (FASFLLGSWVLSALFDFLLVE) traverse the membrane as a helical segment. At 113-125 (AMQYFFGITAASN) the chain is on the cytoplasmic side. Residues 126–146 (LPSGFLAPVFALFVPFYCSIP) form a helical membrane-spanning segment. At 147-163 (RVQVAQILGPLSITNKT) the chain is on the extracellular side. Residue N161 is glycosylated (N-linked (GlcNAc...) asparagine). The helical transmembrane segment at 164-184 (LIYILGLQLFTSGSYIWIVAI) threads the bilayer. At 185-345 (SGLMSGLCYN…NVATNFLLQH (161 aa)) the chain is on the cytoplasmic side. Residues 305–345 (EVSEEQVARLMEMGFSRGDALEALRASNNDLNVATNFLLQH) enclose the UBA domain.

Interacts with LMBR1L, FAF2, AMFR and VCP.

Its subcellular location is the endoplasmic reticulum membrane. Its function is as follows. Restricts trafficking of FAF2 from the endoplasmic reticulum to lipid droplets. In association with LMBR1L and E3 ubiquitin-protein ligase AMFR, negatively regulates the canonical Wnt signaling pathway in the lymphocytes by promoting the ubiquitin-mediated degradation of CTNNB1 and Wnt receptors FZD6 and LRP6. This Macaca fascicularis (Crab-eating macaque) protein is Ubiquitin-associated domain-containing protein 2 (UBAC2).